The following is a 487-amino-acid chain: GTPase Der (487 aa).

2 consecutive EngA-type G domains span residues 3–166 and 201–374; these read PVIA…IAEL and VKLA…ESAT. Residues 9–16, 56–60, 118–121, 207–214, 254–258, and 319–322 each bind GTP; these read GRPNVGKS, DTGGI, NKTD, DTAGV, and NKWD. One can recognise a KH-like domain in the interval 375-459; sequence KRISTAMLRR…PIKIEFREGD (85 aa).

Belongs to the TRAFAC class TrmE-Era-EngA-EngB-Septin-like GTPase superfamily. EngA (Der) GTPase family. Associates with the 50S ribosomal subunit.

GTPase that plays an essential role in the late steps of ribosome biogenesis. The polypeptide is GTPase Der (Pseudoalteromonas translucida (strain TAC 125)).